Consider the following 386-residue polypeptide: N-terminal EF-hand calcium-binding protein 2 (386 aa).

Arg-10 is modified (omega-N-methylarginine). Asymmetric dimethylarginine is present on Arg-42. EF-hand domains are found at residues 60–95 and 96–129; these read GGTAVILDIFRRADKNDDGKLSLEEFQLFFADGVLN and EKELEDLFHTIDSDNTNHVDTKELCDYFVDHMGD. Ca(2+)-binding residues include Asp-73, Asn-75, Asp-77, Lys-79, Glu-84, Asp-107, Asp-109, Thr-111, His-113, and Glu-118. Positions 170-201 form a coiled coil; sequence LKETANQIQSLLSSVESAVEAIEEQTSQLRQN. Residues 286–375 enclose the ABM domain; it reads QLVRQEMAVC…SQPEALSRIL (90 aa).

As to quaternary structure, interacts (calcium-dependent) with ADORA2A and GRM5. In terms of tissue distribution, expressed in brain. Expressed in the spinal dorsal horn with especially strong expression in lamina IIi; found in excitory synaptic boutons and in ependymal cells (at protein level).

The protein resides in the cytoplasm. The protein localises to the cell projection. Its subcellular location is the dendrite. It localises to the axon. It is found in the cell membrane. May act as a signaling scaffold protein that senses intracellular calcium. Can modulate ligand-induced internalization of ADORA2A and coupling efficiency of mGluR5/GRM5; for both receptors may regulate signaling activity such as promoting MAPK1/3 (ERK1/2) activation. This is N-terminal EF-hand calcium-binding protein 2 (NECAB2) from Homo sapiens (Human).